A 225-amino-acid polypeptide reads, in one-letter code: MOB-like protein phocein (225 aa).

Residues Cys92, Cys97, Cys110, His113, Cys119, His127, His169, and His174 each coordinate Zn(2+).

This sequence belongs to the MOB1/phocein family. As to quaternary structure, binds STRN4. Interacts with DNM1 and EPS15. Interacts with nucleoside diphosphate kinase. Interacts with CTTNBP2. Interacts with CTTNBP2NL. Part of the core of STRIPAK complexes composed of PP2A catalytic and scaffolding subunits, the striatins (PP2A regulatory subunits), the striatin-associated proteins MOB4, STRIP1 and STRIP2, PDCD10 and members of the STE20 kinases, such as STK24 and STK26. Post-translationally, phosphorylated on serine residues. As to expression, highly expressed in adrenal gland, spinal cord, brain and cerebellum. Detected at lower levels in heart and skeletal muscle, and at very low levels in spleen, liver and intestine.

The protein localises to the cytoplasm. It localises to the membrane. The protein resides in the golgi apparatus. It is found in the golgi stack membrane. Part of the striatin-interacting phosphatase and kinase (STRIPAK) complexes. STRIPAK complexes have critical roles in protein (de)phosphorylation and are regulators of multiple signaling pathways including Hippo, MAPK, nuclear receptor and cytoskeleton remodeling. Different types of STRIPAK complexes are involved in a variety of biological processes such as cell growth, differentiation, apoptosis, metabolism and immune regulation. This Rattus norvegicus (Rat) protein is MOB-like protein phocein (Mob4).